We begin with the raw amino-acid sequence, 169 residues long: Disulfide bond formation protein B 1 (169 aa).

Residues Met-1–Phe-14 are Cytoplasmic-facing. A helical transmembrane segment spans residues Leu-15–Tyr-31. Topologically, residues Met-32–Tyr-49 are periplasmic. Cys-41 and Cys-44 are oxidised to a cystine. A helical transmembrane segment spans residues Ala-50–Met-64. At Ser-65 to Thr-71 the chain is on the cytoplasmic side. Residues Val-72–Gly-89 form a helical membrane-spanning segment. Residues His-90–Gln-144 are Periplasmic-facing. Residues Cys-102 and Cys-130 are joined by a disulfide bond. The chain crosses the membrane as a helical span at residues Trp-145–Arg-163. Over Asn-164–Tyr-169 the chain is Cytoplasmic.

The protein belongs to the DsbB family.

It localises to the cell inner membrane. Required for disulfide bond formation in some periplasmic proteins. Acts by oxidizing the DsbA protein. The sequence is that of Disulfide bond formation protein B 1 from Pseudomonas fluorescens (strain ATCC BAA-477 / NRRL B-23932 / Pf-5).